The primary structure comprises 340 residues: Probable complex I intermediate-associated protein 30, mitochondrial (340 aa).

It belongs to the CIA30 family.

The protein resides in the mitochondrion. Chaperone protein involved in the assembly of the mitochondrial NADH:ubiquinone oxidoreductase complex (complex I). Required for normal growth and reproduction. This chain is Probable complex I intermediate-associated protein 30, mitochondrial (nuaf-1), found in Caenorhabditis briggsae.